The chain runs to 144 residues: Galectin a (144 aa).

In terms of domain architecture, Galectin spans 1 to 138; the sequence is DHIDLEFDVG…DAVLRKLCVV (138 aa).

In terms of assembly, tetramer.

In terms of biological role, lectin that binds beta-galactoside and a wide array of complex carbohydrates. This chain is Galectin a, found in Aplysina lactuca (Marine sponge).